We begin with the raw amino-acid sequence, 468 residues long: Chromosomal replication initiator protein DnaA (468 aa).

Residues 1–84 (MSSSLWLQCL…RFEVGSKPIS (84 aa)) are domain I, interacts with DnaA modulators. A domain II region spans residues 84 to 131 (SAPPRPQRTAADVAAATSAPAQMQARQSLHKPWESRGPEPVDDLNHRS). Residues 112–132 (LHKPWESRGPEPVDDLNHRSN) form a disordered region. Residues 114–129 (KPWESRGPEPVDDLNH) show a composition bias toward basic and acidic residues. Residues 132 to 348 (NVNPKHKFTN…GALNRVVANA (217 aa)) form a domain III, AAA+ region region. Positions 176, 178, 179, and 180 each coordinate ATP. The interval 349–468 (NFTGRAITID…YSNLIRTLSS (120 aa)) is domain IV, binds dsDNA.

This sequence belongs to the DnaA family. As to quaternary structure, oligomerizes as a right-handed, spiral filament on DNA at oriC.

Its subcellular location is the cytoplasm. Plays an essential role in the initiation and regulation of chromosomal replication. ATP-DnaA binds to the origin of replication (oriC) to initiate formation of the DNA replication initiation complex once per cell cycle. Binds the DnaA box (a 9 base pair repeat at the origin) and separates the double-stranded (ds)DNA. Forms a right-handed helical filament on oriC DNA; dsDNA binds to the exterior of the filament while single-stranded (ss)DNA is stabiized in the filament's interior. The ATP-DnaA-oriC complex binds and stabilizes one strand of the AT-rich DNA unwinding element (DUE), permitting loading of DNA polymerase. After initiation quickly degrades to an ADP-DnaA complex that is not apt for DNA replication. Binds acidic phospholipids. The sequence is that of Chromosomal replication initiator protein DnaA from Aliivibrio salmonicida (strain LFI1238) (Vibrio salmonicida (strain LFI1238)).